The chain runs to 450 residues: Caspase Dronc (450 aa).

The propeptide occupies 1–134 (MQPPELEIGM…RTSRKSADIV (134 aa)). The CARD domain occupies 64–109 (EKDVRVEQHRRLLLKITQRGPTAYNLLINALRNINCLDAAVLLESV). The interval 114 to 125 (SRPPFISLNERR) is required for binding Diap1. Residues histidine 271 and cysteine 318 contribute to the active site. The propeptide occupies 321 to 324 (DEYD).

This sequence belongs to the peptidase C14A family. Interacts (via residues 114-125) with Diap1 (via BIR 2 domain); binding blocks Dronc-mediated cell death. Can form a stable complex with Drice. Rpr, hid and grim can out-compete Dronc for binding Diap1, therefore removing Diap1-mediated ubiquitination. Interacts (via CARD domain) with Dark (via Dark CARD and WD domains); the interaction stimulates Dark oligomerization to form the apoptosome and brings pairs of Dronc molecules together on the apoptosome to facilitate their dimerization and activation by autocatalytic cleavage. Binding to Dark stimulates apoptosome assembly. After autocatalytic cleavage the Dronc caspase domain dissociates from the apoptosome but the CARD domain remains associated. Post-translationally, ubiquitinated by Diap1, leading to its subsequent degradation. Ubiquitously expressed in embryos during early stages of development. In late third instar larvae, dramatic up-regulation in salivary glands and midgut before histolysis of these tissues.

The protein resides in the cytoplasm. It catalyses the reaction Strict requirement for an Asp residue at position P1 and with a marked preference for His at position P2. It has a preferred cleavage sequence of Leu-Gly-His-Asp-|-Xaa.. Zymogen activated by autocatalytic cleavage; association with the Dark apoptosome brings multiple molecules together to facilitate their dimerization and activation by autocatalytic cleavage. In terms of biological role, involved in the activation cascade of caspases responsible for apoptosis execution. Effector of steroid-mediated apoptosis during insect metamorphosis. Overexpression promotes programmed cell death. Interaction with Diap1 is required to suppress Dronc-mediated cell death; via Diap1-mediated ubiquitination of Dronc. Rate-limiting caspase in rpr, grim and hid death pathway. Recruited to the Dark apoptosome, an adapter protein complex that mediates activation of the caspase cascade in programmed cell death initiated by the intrinsic apoptosis pathway. Association with the Dark apoptosome stimulates autocatalytic cleavage and activation of Dronc, promoting Dronc-mediated cleavage of downstream effector caspases such as Drice. This chain is Caspase Dronc, found in Drosophila melanogaster (Fruit fly).